The sequence spans 477 residues: Spliceosome-associated protein CWC27 homolog (477 aa).

Positions 11-166 constitute a PPIase cyclophilin-type domain; that stretch reads SNGKVLLKTT…NPHKIKCTEV (156 aa). 2 disordered regions span residues 203 to 355 and 401 to 477; these read LLSF…AENT and TQAI…KERR. The segment covering 208–218 has biased composition (acidic residues); the sequence is EEAEEDEEEVN. 2 stretches are compositionally biased toward basic and acidic residues: residues 230–240 and 247–258; these read SSHDLLKDDPR and VEREKDSQSADS. Over residues 259–279 the composition is skewed to acidic residues; it reads DKDEDEMSDDDDEEEDDEMDS. Basic and acidic residues-rich tracts occupy residues 280–299, 311–353, and 430–442; these read DEKH…DPSK, EERK…KEAE, and QFEE…KDAN. Residues 308-381 are a coiled coil; it reads DEAEERKSSR…EEVRKKNTNK (74 aa).

This sequence belongs to the cyclophilin-type PPIase family. As to quaternary structure, part of the activated spliceosome B/catalytic step 1 spliceosome, one of the forms of the spliceosome which has a well-formed active site but still cannot catalyze the branching reaction and is composed at least of 52 proteins, the U2, U5 and U6 snRNAs and the pre-mRNA. Recruited during early steps of activated spliceosome B maturation, it is probably one of the first proteins released from this complex as he matures to the spliceosome C complex. Component of the minor spliceosome, which splices U12-type introns.

The protein resides in the nucleus. In terms of biological role, as part of the spliceosome, plays a role in pre-mRNA splicing. Probable inactive PPIase with no peptidyl-prolyl cis-trans isomerase activity. The sequence is that of Spliceosome-associated protein CWC27 homolog (cwc27) from Xenopus laevis (African clawed frog).